The chain runs to 1130 residues: Sterol regulatory element-binding protein 2 (1130 aa).

The interval 1–50 (MDESSELGVLETMETLTELGDELTLGDIDEMLQFVSNQVGEFPDLFSEQL) is transcriptional activation (acidic). At 1 to 470 (MDESSELGVL…VALGMVDRSR (470 aa)) the chain is on the cytoplasmic side. The interval 53-133 (SFPGGGSNGG…PQPQPQPPAQ (81 aa)) is disordered. The span at 55 to 64 (PGGGSNGGSG) shows a compositional bias: gly residues. Residues 83 to 93 (RSFSQVPLSTF) are compositionally biased toward polar residues. Over residues 94-104 (SPSAASPQAPA) the composition is skewed to low complexity. Over residues 111-131 (PTPPRATPVLQPRPQPQPQPP) the composition is skewed to pro residues. The interaction with LMNA stretch occupies residues 226–480 (QQVPVLVQPQ…ILLCVLTFLG (255 aa)). One can recognise a bHLH domain in the interval 319–369 (ERRTTHNIIEKRYRSSINDKIIELKDLVMGTDAKMHKSGVLRKAIDYIKYL). The leucine-zipper stretch occupies residues 369–390 (LQQVNHKLRQENMVLKLANQKN). Residue Lys-453 forms a Glycyl lysine isopeptide (Lys-Gly) (interchain with G-Cter in SUMO2) linkage. Residues 471 to 491 (ILLCVLTFLGLSFNPLTSLLQ) form a helical membrane-spanning segment. Over 492–522 (WGGAHNTDQHPYSGSGRSVLSLESGAGGWFD) the chain is Lumenal. The chain crosses the membrane as a helical span at residues 523-543 (WMVPTLLLWLVNGVIVLSVFV). Residues 544-1130 (KLLVHGEPVI…LGGGTAIAAS (587 aa)) lie on the Cytoplasmic side of the membrane. Ser-1087 is modified (phosphoserine).

It belongs to the SREBP family. As to quaternary structure, forms a tight complex with SCAP, the SCAP-SREBP complex, in the endoplasmic reticulum membrane and the Golgi apparatus. Interacts with PAQR3; the interaction anchors the SCAP-SREBP complex to the Golgi apparatus in low cholesterol conditions. Interacts (via C-terminal domain) with RNF139. Homodimer; efficient DNA binding of the soluble transcription factor fragment requires dimerization with another bHLH protein. Interacts with LMNA. Processed in the Golgi apparatus, releasing the protein from the membrane. At low cholesterol the SCAP-SREBP complex is recruited into COPII vesicles for export from the endoplasmic reticulum. In the Golgi, complex SREBPs are cleaved sequentially by site-1 (MBTPS1, S1P) and site-2 (MBTPS2, S2P) proteases. The first cleavage by site-1 protease occurs within the luminal loop, the second cleavage by site-2 protease occurs within the first transmembrane domain, releasing the transcription factor from the Golgi membrane. Apoptosis triggers cleavage by the cysteine proteases caspase-3 and caspase-7. Cleavage and activation is induced by mediated cholesterol efflux. In terms of processing, phosphorylated by AMPK, leading to suppress protein processing and nuclear translocation, and repress target gene expression. Post-translationally, SCAP-free SREBF2 is ubiquitinated by the BCR(ARMC5) complex, leading to its degradation. Ubiquitinated; the nuclear form has a rapid turnover and is rapidly ubiquitinated and degraded by the proteasome in the nucleus.

It localises to the endoplasmic reticulum membrane. The protein resides in the golgi apparatus membrane. Its subcellular location is the cytoplasmic vesicle. It is found in the COPII-coated vesicle membrane. The protein localises to the nucleus. With respect to regulation, activation by cleavage is down-regulated upon activation of SIRT3-dependent PRKAA1/AMPK-alpha signaling cascade which leads to inhibition of ATP-consuming lipogenesis to restore cellular energy balance. Its function is as follows. Precursor of the transcription factor form (Processed sterol regulatory element-binding protein 2), which is embedded in the endoplasmic reticulum membrane. Low sterol concentrations promote processing of this form, releasing the transcription factor form that translocates into the nucleus and activates transcription of genes involved in cholesterol biosynthesis. Key transcription factor that regulates expression of genes involved in cholesterol biosynthesis. Binds to the sterol regulatory element 1 (SRE-1) (5'-ATCACCCCAC-3'). Has dual sequence specificity binding to both an E-box motif (5'-ATCACGTGA-3') and to SRE-1 (5'-ATCACCCCAC-3'). Regulates transcription of genes related to cholesterol synthesis pathway. This chain is Sterol regulatory element-binding protein 2, found in Mus musculus (Mouse).